We begin with the raw amino-acid sequence, 89 residues long: Small ribosomal subunit protein uS15 (89 aa).

This sequence belongs to the universal ribosomal protein uS15 family. In terms of assembly, part of the 30S ribosomal subunit. Forms a bridge to the 50S subunit in the 70S ribosome, contacting the 23S rRNA.

Its function is as follows. One of the primary rRNA binding proteins, it binds directly to 16S rRNA where it helps nucleate assembly of the platform of the 30S subunit by binding and bridging several RNA helices of the 16S rRNA. Forms an intersubunit bridge (bridge B4) with the 23S rRNA of the 50S subunit in the ribosome. This Rhizobium rhizogenes (strain K84 / ATCC BAA-868) (Agrobacterium radiobacter) protein is Small ribosomal subunit protein uS15.